Reading from the N-terminus, the 1011-residue chain is Protein translocase subunit SecA (1011 aa).

ATP contacts are provided by residues glutamine 87, 105-109, and aspartate 500; that span reads GEGKT. The segment at 969-1011 is disordered; sequence SLPLGANPAPARPQPAVMQEQECPCGSGKPFNKCHGGEDEATA. Zn(2+)-binding residues include cysteine 991, cysteine 993, cysteine 1002, and histidine 1003.

Belongs to the SecA family. Monomer and homodimer. Part of the essential Sec protein translocation apparatus which comprises SecA, SecYEG and auxiliary proteins SecDF-YajC and YidC. Zn(2+) is required as a cofactor.

The protein localises to the cell inner membrane. It localises to the cytoplasm. It catalyses the reaction ATP + H2O + cellular proteinSide 1 = ADP + phosphate + cellular proteinSide 2.. In terms of biological role, part of the Sec protein translocase complex. Interacts with the SecYEG preprotein conducting channel. Has a central role in coupling the hydrolysis of ATP to the transfer of proteins into and across the cell membrane, serving as an ATP-driven molecular motor driving the stepwise translocation of polypeptide chains across the membrane. The protein is Protein translocase subunit SecA of Sorangium cellulosum (strain So ce56) (Polyangium cellulosum (strain So ce56)).